We begin with the raw amino-acid sequence, 138 residues long: Putative pre-16S rRNA nuclease (138 aa).

The protein belongs to the YqgF nuclease family.

The protein localises to the cytoplasm. In terms of biological role, could be a nuclease involved in processing of the 5'-end of pre-16S rRNA. This is Putative pre-16S rRNA nuclease from Geobacillus thermodenitrificans (strain NG80-2).